The sequence spans 408 residues: Imidazolonepropionase (408 aa).

Residues His73 and His75 each contribute to the Fe(3+) site. Positions 73 and 75 each coordinate Zn(2+). 3 residues coordinate 4-imidazolone-5-propanoate: Arg82, Tyr145, and His178. Tyr145 provides a ligand contact to N-formimidoyl-L-glutamate. Residue His243 coordinates Fe(3+). His243 is a binding site for Zn(2+). Gln246 is a binding site for 4-imidazolone-5-propanoate. A Fe(3+)-binding site is contributed by Asp318. Zn(2+) is bound at residue Asp318. Residues Asn320 and Gly322 each contribute to the N-formimidoyl-L-glutamate site. Ser323 serves as a coordination point for 4-imidazolone-5-propanoate.

It belongs to the metallo-dependent hydrolases superfamily. HutI family. Requires Zn(2+) as cofactor. Fe(3+) serves as cofactor.

It localises to the cytoplasm. It catalyses the reaction 4-imidazolone-5-propanoate + H2O = N-formimidoyl-L-glutamate. Its pathway is amino-acid degradation; L-histidine degradation into L-glutamate; N-formimidoyl-L-glutamate from L-histidine: step 3/3. Functionally, catalyzes the hydrolytic cleavage of the carbon-nitrogen bond in imidazolone-5-propanoate to yield N-formimidoyl-L-glutamate. It is the third step in the universal histidine degradation pathway. The polypeptide is Imidazolonepropionase (Shewanella halifaxensis (strain HAW-EB4)).